Consider the following 387-residue polypeptide: Norsolorinic acid reductase stcV (387 aa).

Residue D69 participates in NADP(+) binding. The active-site Proton donor is the Y74. H148 is a substrate binding site. NADP(+) contacts are provided by residues 178-179, Q204, 233-243, and 301-309; these read SD, GALGRGQYKSA, and RTVEQLEAN.

The protein belongs to the aldo/keto reductase family. Aldo/keto reductase 2 subfamily.

The protein operates within mycotoxin biosynthesis; sterigmatocystin biosynthesis. Its function is as follows. Norsolorinic acid reductase; part of the gene cluster that mediates the biosynthesis of sterigmatocystin (ST), a polyketide-derived furanocoumarin which is part of the most toxic and carcinogenic compounds among the known mycotoxins. The first step in the biosynthesis of sterigmatocystin is the production of hexanoate by the fatty acid synthase (FAS) units stcJ and stcK. The polyketide backbone is assembled by the non-reducing polyketide synthase stcA by condensation of the starter hexanoyl-CoA and 7 malonyl-CoA extender units followed by cyclization and release of norsolorinic acid. Norsolorinic acid is the first stable intermediate in the biosynthesis of sterigmatocystin and is converted into averantin (AVN) by the ketoreductase stcE which reduces the hexanoate ketone to an alcohol. Averantin is then oxidized into 5'-hydroxyaverantin (HAVN) by the cytochrome P450 monooxygenase stcF. 5'-hydroxyaverantin is further converted to 5'-oxyaverantin (OAVN) by the 5'-hydroxyaverantin dehydrogenase stcG. The next step is the conversion of OAVN into averufin (AVF) which is catalyzed by a yet to be identified enzyme. The cytochrome P450 monooxygenase stcB and the flavin-binding monooxygenase stcW are both required for the conversion of averufin to 1-hydroxyversicolorone. The esterase stcI probably catalyzes the formation of versiconal hemiacetal acetate from 1-hydroxyversicolorone. The oxydoreductase stcN then probably catalyzes the biosynthetic step from versiconal to versicolorin B (VERB). The next step is performed by the versicolorin B desaturase stcL to produce versicolorin A (VERA). The ketoreductase stcU and the cytochrome P450 monooxygenase stcS are involved in the conversion of versicolorin A to demethylsterigmatocystin. The Baeyer-Villiger oxidas stcQ and the reductase stcR might be involved in the biosynthetic step from versicolorin A to demethylsterigmatocystin. The final step in the biosynthesis of sterigmatocystin is the methylation of demethylsterigmatocystin catalyzed by the methyltransferase stcP. The polypeptide is Norsolorinic acid reductase stcV (Emericella nidulans (strain FGSC A4 / ATCC 38163 / CBS 112.46 / NRRL 194 / M139) (Aspergillus nidulans)).